The sequence spans 346 residues: Lipooligosaccharide heptosyltransferase 2 (346 aa).

Belongs to the glycosyltransferase 9 family.

It catalyses the reaction an L-alpha-D-Hep-(1-&gt;5)-[alpha-Kdo-(2-&gt;4)]-alpha-Kdo-(2-&gt;6)-lipid A + ADP-L-glycero-beta-D-manno-heptose = an L-alpha-D-Hep-(1-&gt;3)-L-alpha-D-Hep-(1-&gt;5)-[alpha-Kdo-(2-&gt;4)]-alpha-Kdo-(2-&gt;6)-lipid A + ADP + H(+). Its pathway is bacterial outer membrane biogenesis; LOS core biosynthesis. In terms of biological role, glycosyltransferase involved in the biosynthesis of the core oligosaccharide region of lipooligosaccharide (LOS). Catalyzes the addition of a heptose unit to the heptosyl-Kdo2-lipid A module. The chain is Lipooligosaccharide heptosyltransferase 2 (waaF) from Haemophilus influenzae (strain ATCC 51907 / DSM 11121 / KW20 / Rd).